The following is a 199-amino-acid chain: ATP-dependent Clp protease proteolytic subunit 2 (199 aa).

The active-site Nucleophile is the serine 95. Histidine 120 is an active-site residue.

It belongs to the peptidase S14 family. As to quaternary structure, fourteen ClpP subunits assemble into 2 heptameric rings which stack back to back to give a disk-like structure with a central cavity, resembling the structure of eukaryotic proteasomes.

It localises to the cytoplasm. The enzyme catalyses Hydrolysis of proteins to small peptides in the presence of ATP and magnesium. alpha-casein is the usual test substrate. In the absence of ATP, only oligopeptides shorter than five residues are hydrolyzed (such as succinyl-Leu-Tyr-|-NHMec, and Leu-Tyr-Leu-|-Tyr-Trp, in which cleavage of the -Tyr-|-Leu- and -Tyr-|-Trp bonds also occurs).. In terms of biological role, cleaves peptides in various proteins in a process that requires ATP hydrolysis. Has a chymotrypsin-like activity. Plays a major role in the degradation of misfolded proteins. This is ATP-dependent Clp protease proteolytic subunit 2 from Mycolicibacterium paratuberculosis (strain ATCC BAA-968 / K-10) (Mycobacterium paratuberculosis).